The sequence spans 191 residues: Orotate phosphoribosyltransferase (191 aa).

116-124 (EDVVTTGGS) contacts 5-phospho-alpha-D-ribose 1-diphosphate. The orotate site is built by Thr120 and Arg148.

The protein belongs to the purine/pyrimidine phosphoribosyltransferase family. PyrE subfamily. As to quaternary structure, homodimer. Requires Mg(2+) as cofactor.

The catalysed reaction is orotidine 5'-phosphate + diphosphate = orotate + 5-phospho-alpha-D-ribose 1-diphosphate. Its pathway is pyrimidine metabolism; UMP biosynthesis via de novo pathway; UMP from orotate: step 1/2. Catalyzes the transfer of a ribosyl phosphate group from 5-phosphoribose 1-diphosphate to orotate, leading to the formation of orotidine monophosphate (OMP). This is Orotate phosphoribosyltransferase from Heliobacterium modesticaldum (strain ATCC 51547 / Ice1).